The sequence spans 171 residues: Transcriptional repressor NrdR (171 aa).

The segment at 1 to 21 (MQCPHCQHTDSRVLESRSSEN) is disordered. The segment at 3–34 (CPHCQHTDSRVLESRSSENGQSIRRRRECLQC) is a zinc-finger region. Positions 7–18 (QHTDSRVLESRS) are enriched in basic and acidic residues. Positions 49-139 (ITVIKKDGKR…VYGNFQGIRD (91 aa)) constitute an ATP-cone domain.

The protein belongs to the NrdR family. Zn(2+) is required as a cofactor.

Negatively regulates transcription of bacterial ribonucleotide reductase nrd genes and operons by binding to NrdR-boxes. The chain is Transcriptional repressor NrdR from Microcystis aeruginosa (strain NIES-843 / IAM M-2473).